A 525-amino-acid polypeptide reads, in one-letter code: G patch domain-containing protein 3 (525 aa).

Residues 264-316 (YLADIPASPCGEPEEEVGKEEEEESHSDEDDDRGEEWERHEALHEDVTGQERT) are disordered. Acidic residues predominate over residues 275 to 298 (EPEEEVGKEEEEESHSDEDDDRGE). Over residues 299–316 (EWERHEALHEDVTGQERT) the composition is skewed to basic and acidic residues. One can recognise a G-patch domain in the interval 410–458 (TKGIGRKVMERQGWAEGQGLGCRCSGVPEALDSDGQHPRCKRGLGYHGE).

As to quaternary structure, interacts with mitochondrial MAVS; the interaction is markedly increased upon viral infection. In terms of tissue distribution, expressed in ocular tissues including retinal pigment epithelium, cornea, ciliary muscle and non-pigmented ciliary epithelium. Also expressed in optic nerve, cartilage, skin and lymph node.

It localises to the nucleus. It is found in the cytoplasm. In terms of biological role, involved in transcriptional regulation. It is able to activate transcription from the CXCR4 promoter and therefore it might control neural crest cell migration involved in ocular and craniofacial development. Is a negative regulator of immune antiviral response, acting via down-regulation of RIG-I-like receptors signaling and inhibition of type I interferon production. The control mechanism involves interaction with mitochondrial MAVS and inhibition of MAVS assembly with downstream proteins implicated in antiviral response, such as TBK1 and TRAF6. The protein is G patch domain-containing protein 3 (GPATCH3) of Homo sapiens (Human).